The primary structure comprises 90 residues: Phaiodotoxin (90 aa).

A signal peptide spans 1–18; that stretch reads MKTIPLLFLLFIYFECDG. Positions 19–90 constitute an LCN-type CS-alpha/beta domain; sequence KFIRHKDESF…CFGALESKCA (72 aa). 4 disulfides stabilise this stretch: Cys-31–Cys-56, Cys-41–Cys-68, Cys-45–Cys-70, and Cys-81–Cys-89.

As to expression, expressed by the venom gland.

The protein localises to the secreted. Sodium channel (Nav) specific neurotoxin. Causes impairment of movement and mild paralysis in crickets at a dose of 0.5 ug per animal. A dose of 0.8 ug per cricket causes clear flaccid paralysis. A dose of 1.0 ug per cricket causes death within 2 hours. Is not toxic to mice at a dose of 100 ug per 20 g mouse weight. This is Phaiodotoxin from Anuroctonus phaiodactylus (Mafia scorpion).